The chain runs to 439 residues: U1 small nuclear ribonucleoprotein 70 kDa (439 aa).

Position 2 is an N-acetylthreonine (T2). The tract at residues 48–79 (FEDPRDAPPPTRAETREERMERKRREKIERRQ) is disordered. Basic and acidic residues predominate over residues 60 to 79 (AETREERMERKRREKIERRQ). The segment at 92-202 (HNDPNAQGDA…GGGLGGTRRG (111 aa)) is required for interaction with U1 RNA. Residues 103-181 (KTLFVARVNY…RRVLVDVERG (79 aa)) form the RRM domain. At K118 the chain carries N6-acetyllysine. Y126 bears the Phosphotyrosine mark. The segment at 187-439 (WRPRRLGGGL…NGYLMEAAPE (253 aa)) is disordered. The span at 192-201 (LGGGLGGTRR) shows a compositional bias: gly residues. Residues 207-254 (NIRHSGRDDTSRYDERPGPSPLPHRDRDRDRERERRERSRERDKERER) show a composition bias toward basic and acidic residues. Phosphoserine occurs at positions 226 and 268. Positions 255 to 268 (RRSRSRDRRRRSRS) are enriched in basic residues. Basic and acidic residues-rich tracts occupy residues 269–286 (RDKE…DKDR) and 294–310 (RSRE…EELR). S323 is subject to Phosphoserine. The segment covering 346-394 (PEEKGRDRDRDRRRSHRSERERRRDRDRDRDREHKRGERGGDRGRDEAR) has biased composition (basic and acidic residues). K349 is covalently cross-linked (Glycyl lysine isopeptide (Lys-Gly) (interchain with G-Cter in SUMO2)). A compositionally biased stretch (gly residues) spans 395–410 (GGGGGGQDNGLEGLGN).

Component of the U1 snRNP. The U1 snRNP is composed of the U1 snRNA and the 7 core Sm proteins SNRPB, SNRPD1, SNRPD2, SNRPD3, SNRPE, SNRPF and SNRPG that assemble in a heptameric protein ring on the Sm site of the small nuclear RNA to form the core snRNP, and at least three U1 snRNP-specific proteins SNRNP70/U1-70K, SNRPA/U1-A and SNRPC/U1-C. Interacts with SCNM1. Found in a pre-mRNA splicing complex with SFRS4, SFRS5, SNRNP70, SNRPA1, SRRM1 and SRRM2. Found in a pre-mRNA exonic splicing enhancer (ESE) complex with SNRNP70, SNRPA1, SRRM1 and TRA2B/SFRS10. Interacts with dephosphorylated SFRS13A and SFPQ. Interacts with NUDT21/CPSF5, CPSF6, SCAF11, and ZRANB2. Interacts with GEMIN5. Interacts with FUS. Extensively phosphorylated on serine residues in the C-terminal region.

It is found in the nucleus speckle. The protein resides in the nucleus. Its subcellular location is the nucleoplasm. Functionally, component of the spliceosomal U1 snRNP, which is essential for recognition of the pre-mRNA 5' splice-site and the subsequent assembly of the spliceosome. SNRNP70 binds to the loop I region of U1-snRNA. This is U1 small nuclear ribonucleoprotein 70 kDa (SNRNP70) from Bos taurus (Bovine).